A 199-amino-acid chain; its full sequence is dCTP deaminase, dUMP-forming (199 aa).

DCTP contacts are provided by residues 101–106, D119, 127–129, Q148, Y162, and Q174; these read KSSLGR and TLE. The active-site Proton donor/acceptor is E129. A disordered region spans residues 163–199; the sequence is GSAAAGSKYQGQRGPTPSRSYLNFPLPSDAVDAVESR. Residues 171–183 are compositionally biased toward polar residues; sequence YQGQRGPTPSRSY.

It belongs to the dCTP deaminase family. Homotrimer.

The enzyme catalyses dCTP + 2 H2O = dUMP + NH4(+) + diphosphate. The protein operates within pyrimidine metabolism; dUMP biosynthesis; dUMP from dCTP: step 1/1. Functionally, bifunctional enzyme that catalyzes both the deamination of dCTP to dUTP and the hydrolysis of dUTP to dUMP without releasing the toxic dUTP intermediate. This Nocardia farcinica (strain IFM 10152) protein is dCTP deaminase, dUMP-forming.